Reading from the N-terminus, the 181-residue chain is 28 kDa heat- and acid-stable phosphoprotein (181 aa).

Positions 1–14 (MPKGGRKGGHKGRA) are enriched in basic residues. Residues 1–117 (MPKGGRKGGH…SRREREEIEK (117 aa)) form a disordered region. Position 18 is a phosphothreonine (Thr18). Ser19 bears the Phosphoserine mark. Basic and acidic residues predominate over residues 30 to 59 (EKQKAREEEEQKEGGDGAAGDPKKEKKSLD). Lys52 is covalently cross-linked (Glycyl lysine isopeptide (Lys-Gly) (interchain with G-Cter in SUMO2)). 3 positions are modified to phosphoserine: Ser57, Ser60, and Ser63. A compositionally biased stretch (acidic residues) spans 60 to 69 (SDESEDEEDD). A Phosphotyrosine modification is found at Tyr70. Residues 102-117 (DGPKELSRREREEIEK) are compositionally biased toward basic and acidic residues. Lys126 carries the N6-methyllysine modification. Residues Lys132 and Lys164 each carry the N6-acetyllysine modification. A compositionally biased stretch (basic and acidic residues) spans 151-167 (EEAARKKEEERKAKDDA). The interval 151-181 (EEAARKKEEERKAKDDATLSGKRMQSLSLNK) is disordered. Ser176 and Ser178 each carry phosphoserine.

The protein belongs to the PDAP1 family.

Functionally, enhances PDGFA-stimulated cell growth in fibroblasts, but inhibits the mitogenic effect of PDGFB. This is 28 kDa heat- and acid-stable phosphoprotein (PDAP1) from Homo sapiens (Human).